Reading from the N-terminus, the 426-residue chain is High affinity 3',5'-cyclic-AMP phosphodiesterase 7A (426 aa).

The PDEase domain maps to 80–402 (LDEDYNGQAK…ASWKGLQRQQ (323 aa)). His-156 acts as the Proton donor in catalysis. 4 residues coordinate a divalent metal cation: His-160, His-196, Asp-197, and Asp-306.

This sequence belongs to the cyclic nucleotide phosphodiesterase family. PDE7 subfamily. As to quaternary structure, interacts with CBFA2T3. A divalent metal cation is required as a cofactor.

Its subcellular location is the cytoplasm. It localises to the cytosol. It catalyses the reaction 3',5'-cyclic AMP + H2O = AMP + H(+). It participates in purine metabolism; 3',5'-cyclic AMP degradation; AMP from 3',5'-cyclic AMP: step 1/1. In terms of biological role, hydrolyzes the second messenger cAMP, which is a key regulator of many important physiological processes. May have a role in muscle signal transduction. This chain is High affinity 3',5'-cyclic-AMP phosphodiesterase 7A (Pde7a), found in Rattus norvegicus (Rat).